Reading from the N-terminus, the 316-residue chain is tRNA dimethylallyltransferase (316 aa).

Residue 17–24 (GPTASGKT) participates in ATP binding. 19 to 24 (TASGKT) provides a ligand contact to substrate. Interaction with substrate tRNA stretches follow at residues 42 to 45 (DSAL), 166 to 170 (QRLSR), and 247 to 252 (RCVGYR).

This sequence belongs to the IPP transferase family. In terms of assembly, monomer. It depends on Mg(2+) as a cofactor.

The enzyme catalyses adenosine(37) in tRNA + dimethylallyl diphosphate = N(6)-dimethylallyladenosine(37) in tRNA + diphosphate. Functionally, catalyzes the transfer of a dimethylallyl group onto the adenine at position 37 in tRNAs that read codons beginning with uridine, leading to the formation of N6-(dimethylallyl)adenosine (i(6)A). This is tRNA dimethylallyltransferase from Salmonella arizonae (strain ATCC BAA-731 / CDC346-86 / RSK2980).